A 454-amino-acid chain; its full sequence is Na(+)/H(+) antiporter NhaA (454 aa).

Transmembrane regions (helical) follow at residues 22-42 (ISGL…NLPF), 64-84 (MGLG…TVGL), 106-126 (LCAV…ISLF), 150-170 (GWAV…ALFA), 190-210 (LLAI…YWFL), 228-248 (VPWL…FEAG), 284-304 (PFSA…VHFE), 306-326 (LTLA…LVVG), 355-375 (MFPA…IASL), and 386-406 (ARFG…ILLS).

This sequence belongs to the NhaA Na(+)/H(+) (TC 2.A.33) antiporter family.

Its subcellular location is the cell membrane. It catalyses the reaction Na(+)(in) + 2 H(+)(out) = Na(+)(out) + 2 H(+)(in). In terms of biological role, na(+)/H(+) antiporter that extrudes sodium in exchange for external protons. The sequence is that of Na(+)/H(+) antiporter NhaA from Bifidobacterium adolescentis (strain ATCC 15703 / DSM 20083 / NCTC 11814 / E194a).